Reading from the N-terminus, the 116-residue chain is Small ribosomal subunit protein bS16 (116 aa).

A disordered region spans residues 88 to 116; it reads RNNPKAAVPGKRMAELAKKKAERAAASAE. Basic and acidic residues predominate over residues 99 to 110; sequence RMAELAKKKAER.

This sequence belongs to the bacterial ribosomal protein bS16 family.

The polypeptide is Small ribosomal subunit protein bS16 (Cereibacter sphaeroides (strain ATCC 17025 / ATH 2.4.3) (Rhodobacter sphaeroides)).